We begin with the raw amino-acid sequence, 101 residues long: NADH-quinone oxidoreductase subunit K (101 aa).

3 consecutive transmembrane segments (helical) span residues L4–L24, I30–F50, and V61–L81.

It belongs to the complex I subunit 4L family. As to quaternary structure, NDH-1 is composed of 14 different subunits. Subunits NuoA, H, J, K, L, M, N constitute the membrane sector of the complex.

Its subcellular location is the cell inner membrane. The catalysed reaction is a quinone + NADH + 5 H(+)(in) = a quinol + NAD(+) + 4 H(+)(out). In terms of biological role, NDH-1 shuttles electrons from NADH, via FMN and iron-sulfur (Fe-S) centers, to quinones in the respiratory chain. The immediate electron acceptor for the enzyme in this species is believed to be ubiquinone. Couples the redox reaction to proton translocation (for every two electrons transferred, four hydrogen ions are translocated across the cytoplasmic membrane), and thus conserves the redox energy in a proton gradient. This Methylovorus glucosotrophus (strain SIP3-4) protein is NADH-quinone oxidoreductase subunit K.